We begin with the raw amino-acid sequence, 102 residues long: Urease subunit beta (102 aa).

This sequence belongs to the urease beta subunit family. In terms of assembly, heterotrimer of UreA (gamma), UreB (beta) and UreC (alpha) subunits. Three heterotrimers associate to form the active enzyme.

Its subcellular location is the cytoplasm. It catalyses the reaction urea + 2 H2O + H(+) = hydrogencarbonate + 2 NH4(+). It functions in the pathway nitrogen metabolism; urea degradation; CO(2) and NH(3) from urea (urease route): step 1/1. The sequence is that of Urease subunit beta from Clostridium perfringens.